We begin with the raw amino-acid sequence, 372 residues long: MSSNAPRHTALDALHRSLGATMTDFAGWDMPLRYGSERDEHLAVRSKAGLFDLSHMGEITVTGPGAAALLNYALVGNIASVGVGRARYTMICRADGGILDDLIVYRLQEQTYLVVANASNAQVVLDALTERAGGFDAVVRDDRDAYALIAVQGPESPGILKSLTDADLDGLKYYAGLPGTVAGVPALIARTGYTGEDGFELFVDPADAEKLWQALTEAGAPAGLVPCGLSCRDTLRLEAGMPLYGHELSTSLTPFDAGLGRVVKFEKEGDFVGREALTEAAALAEKNPPRVLVGLIAEGRRVPRAGYPVVVGGEVIGEVTSGAPSPTLGRPIAMAYVDAAHAAPGTAGVGVDIRGSHEPYEVVALPFYRRQK.

The protein belongs to the GcvT family. In terms of assembly, the glycine cleavage system is composed of four proteins: P, T, L and H.

The enzyme catalyses N(6)-[(R)-S(8)-aminomethyldihydrolipoyl]-L-lysyl-[protein] + (6S)-5,6,7,8-tetrahydrofolate = N(6)-[(R)-dihydrolipoyl]-L-lysyl-[protein] + (6R)-5,10-methylene-5,6,7,8-tetrahydrofolate + NH4(+). Its function is as follows. The glycine cleavage system catalyzes the degradation of glycine. This is Aminomethyltransferase from Streptomyces avermitilis (strain ATCC 31267 / DSM 46492 / JCM 5070 / NBRC 14893 / NCIMB 12804 / NRRL 8165 / MA-4680).